The following is an 848-amino-acid chain: Phosphatidate phosphatase LPIN3 (848 aa).

An N-LIP region spans residues 1–108 (MNYVGQLAET…VPPRLCTSPI (108 aa)). Disordered stretches follow at residues 97 to 233 (EDVP…SPLR), 271 to 298 (PEEP…PGVR), and 314 to 373 (AVDS…NQHL). Positions 135-144 (GRRKRRRRRK) match the Nuclear localization signal motif. Basic residues predominate over residues 135 to 146 (GRRKRRRRRKPR). Residues 151–164 (DAVDSSSEELEAGA) are compositionally biased toward acidic residues. Phosphoserine is present on residues S155 and S156. Residues 165–191 (ESELTLLEKPTPESPSAQEAEEPSSQP) show a composition bias toward low complexity. The residue at position 218 (S218) is a Phosphoserine. Residues 271–282 (PEEPSPSSSPSE) are compositionally biased toward low complexity. A compositionally biased stretch (polar residues) spans 342-358 (KSWSWTTPESHTPSGHP). At S460 the chain carries Phosphoserine. The segment covering 536 to 556 (EEHSSQREKAATRKQQGEKTE) has biased composition (basic and acidic residues). A disordered region spans residues 536–568 (EEHSSQREKAATRKQQGEKTEVLSSDDDVPDSP). Residues 587–789 (YKKSLRLSSD…RIFTVNPRGE (203 aa)) are C-LIP. Positions 641 to 645 (DIDGT) match the DXDXT motif motif. The LXXIL motif signature appears at 652 to 656 (LGHIL).

It belongs to the lipin family. Requires Mg(2+) as cofactor. Significant expression in intestine and other regions of the gastrointestinal tract.

It is found in the nucleus. The catalysed reaction is a 1,2-diacyl-sn-glycero-3-phosphate + H2O = a 1,2-diacyl-sn-glycerol + phosphate. Inhibited by N-ethylmaleimide. Its function is as follows. Magnesium-dependent phosphatidate phosphatase enzyme which catalyzes the conversion of phosphatidic acid to diacylglycerol during triglyceride, phosphatidylcholine and phosphatidylethanolamine biosynthesis therefore regulates fatty acid metabolism. The chain is Phosphatidate phosphatase LPIN3 from Mus musculus (Mouse).